The primary structure comprises 341 residues: Gibberellin 2-beta-dioxygenase 5 (341 aa).

Residues 187–290 enclose the Fe2OG dioxygenase domain; it reads REETCFLRLN…RFSMAFFLCP (104 aa). Residue Tyr198 coordinates 2-oxoglutarate. 3 residues coordinate Fe cation: His213, Asp215, and His271. Residues Arg281 and Ser283 each contribute to the 2-oxoglutarate site.

This sequence belongs to the iron/ascorbate-dependent oxidoreductase family. GA2OX subfamily. Requires L-ascorbate as cofactor. Fe(2+) is required as a cofactor. Expressed in roots, leaves, culms, leaf sheaths and young panicles.

It is found in the cytoplasm. The protein resides in the nucleus. The catalysed reaction is gibberellin A1 + 2-oxoglutarate + O2 = gibberellin A8 + succinate + CO2. Its pathway is plant hormone biosynthesis; gibberellin biosynthesis. Functionally, catalyzes the 2-beta-hydroxylation of several biologically active gibberellins (GAs), leading to the homeostatic regulation of their endogenous level. Catabolism of GAs plays a central role in plant development. In vitro, converts GA12 and GA53 to the corresponding 2-beta-hydroxylated products GA110 and GA97, respectively. This is Gibberellin 2-beta-dioxygenase 5 from Oryza sativa subsp. japonica (Rice).